Here is a 217-residue protein sequence, read N- to C-terminus: Ras-related protein Rab-19 (217 aa).

GTP-binding residues include S26, V28, G29, K30, T31, C32, Y42, S43, E44, S45, and T49. Position 31 (T31) interacts with Mg(2+). Residues 39-54 (SGVYSESQQNTIGVDF) carry the Switch 1 motif. T49 and D72 together coordinate Mg(2+). Positions 74 to 89 (AGQERFRTITQSYYRS) match the Switch 2 motif. GTP is bound by residues G75, N130, K131, D133, S161, A162, and K163. Residues C215 and C217 are each lipidated (S-geranylgeranyl cysteine). A Cysteine methyl ester modification is found at C217.

Belongs to the small GTPase superfamily. Rab family. Mg(2+) is required as a cofactor. Expressed in a tissue-specific manner. Detected at high levels in intestine, lung and spleen, and at a lower level in kidney.

It is found in the cell membrane. It carries out the reaction GTP + H2O = GDP + phosphate + H(+). Its activity is regulated as follows. Regulated by guanine nucleotide exchange factors (GEFs) which promote the exchange of bound GDP for free GTP. Regulated by GTPase activating proteins (GAPs) which increase the GTP hydrolysis activity. Inhibited by GDP dissociation inhibitors (GDIs). Its function is as follows. The small GTPases Rab are key regulators of intracellular membrane trafficking, from the formation of transport vesicles to their fusion with membranes. Rabs cycle between an inactive GDP-bound form and an active GTP-bound form that is able to recruit to membranes different set of downstream effectors directly responsible for vesicle formation, movement, tethering and fusion. The chain is Ras-related protein Rab-19 from Mus musculus (Mouse).